A 369-amino-acid chain; its full sequence is Tetraacyldisaccharide 4'-kinase (369 aa).

52-59 (TVGGTGKT) is a binding site for ATP.

The protein belongs to the LpxK family.

It catalyses the reaction a lipid A disaccharide + ATP = a lipid IVA + ADP + H(+). The protein operates within glycolipid biosynthesis; lipid IV(A) biosynthesis; lipid IV(A) from (3R)-3-hydroxytetradecanoyl-[acyl-carrier-protein] and UDP-N-acetyl-alpha-D-glucosamine: step 6/6. Its function is as follows. Transfers the gamma-phosphate of ATP to the 4'-position of a tetraacyldisaccharide 1-phosphate intermediate (termed DS-1-P) to form tetraacyldisaccharide 1,4'-bis-phosphate (lipid IVA). The polypeptide is Tetraacyldisaccharide 4'-kinase (Parabacteroides distasonis (strain ATCC 8503 / DSM 20701 / CIP 104284 / JCM 5825 / NCTC 11152)).